Consider the following 188-residue polypeptide: Inner membrane-spanning protein YciB (188 aa).

The next 5 membrane-spanning stretches (helical) occupy residues Ile22–Met42, Met50–Asn70, Leu72–Ser92, Phe121–Leu141, and Phe149–Ile169.

It belongs to the YciB family.

It localises to the cell inner membrane. In terms of biological role, plays a role in cell envelope biogenesis, maintenance of cell envelope integrity and membrane homeostasis. The protein is Inner membrane-spanning protein YciB of Pectobacterium carotovorum subsp. carotovorum (strain PC1).